Here is a 464-residue protein sequence, read N- to C-terminus: Septin homolog spn5 (464 aa).

Positions 28–91 (QVDESSAKRS…VPNSNGKSIP (64 aa)) are disordered. 2 stretches are compositionally biased toward basic and acidic residues: residues 41–54 (ESRK…KEQI) and 69–81 (TAKD…KQDE). Positions 115 to 370 (NGIDINLIVV…DTFRTEKLVA (256 aa)) constitute a Septin-type G domain. Positions 125–132 (GESSLGKT) are G1 motif. Residues 125–132 (GESSLGKT), threonine 151, glycine 177, 257–265 (KADTMTSDE), glycine 304, and arginine 319 contribute to the GTP site. Residues 174–177 (DTPG) form a G3 motif region. Residues 256–259 (GKAD) are G4 motif. A coiled-coil region spans residues 396-453 (LVEEALTKVMKEKYREKENNLELLETNLKTHHKDYKHALKKRITALEEEKNRLIKEIG).

Belongs to the TRAFAC class TrmE-Era-EngA-EngB-Septin-like GTPase superfamily. Septin GTPase family. As to quaternary structure, component of the sporulation-specific septin complex composed of at least spn2, spn5, spn6 and spn7.

It is found in the nucleus. It localises to the forespore membrane. Functionally, septin-like protein involved in the correct orientation of forespore membrane extension during sporulation. This Schizosaccharomyces pombe (strain 972 / ATCC 24843) (Fission yeast) protein is Septin homolog spn5 (spn5).